The chain runs to 1126 residues: Translation initiation factor IF-2 (1126 aa).

The disordered stretch occupies residues 63 to 519 (LSINKPSIKK…TTRQRQKRRA (457 aa)). Positions 70–83 (IKKDNFKQNKEDKS) are enriched in basic and acidic residues. Low complexity predominate over residues 93–111 (PLKNNSNKKPLLIKPLNKP). Positions 116-151 (KISNQLQNPNKPNIVNSSQSRANLTNTNSKPSQNFN) are enriched in polar residues. The segment covering 161–171 (TPPPIKSPAKP) has biased composition (pro residues). A compositionally biased stretch (polar residues) spans 181 to 195 (NINNNVKSSESSQNI). Composition is skewed to low complexity over residues 211-224 (NTNKPKTKNFNNRK) and 240-252 (IINPNKQNNNKQN). Residues 254 to 264 (AFKQTASNRPG) are compositionally biased toward polar residues. 2 stretches are compositionally biased toward low complexity: residues 291-315 (NRQGNPNRPGSPNRPGMPNRPGLRN) and 327-349 (NRQGNPNRPGSPNGPGMPNNRPG). Over residues 429 to 443 (GKTDWDDSAKLEALR) the composition is skewed to basic and acidic residues. The span at 501–517 (KQFKKKKKETTRQRQKR) shows a compositional bias: basic residues. Residues 618-790 (RRPPVITVMG…ILLVSDVEDL (173 aa)) form the tr-type G domain. Residues 627–634 (GHVDHGKT) are G1. Position 627-634 (627-634 (GHVDHGKT)) interacts with GTP. The interval 652-656 (GITQH) is G2. Positions 677 to 680 (DTPG) are G3. GTP is bound by residues 677 to 681 (DTPGH) and 731 to 734 (NKID). The G4 stretch occupies residues 731-734 (NKID). The G5 stretch occupies residues 767-769 (SAI).

Belongs to the TRAFAC class translation factor GTPase superfamily. Classic translation factor GTPase family. IF-2 subfamily.

The protein resides in the cytoplasm. One of the essential components for the initiation of protein synthesis. Protects formylmethionyl-tRNA from spontaneous hydrolysis and promotes its binding to the 30S ribosomal subunits. Also involved in the hydrolysis of GTP during the formation of the 70S ribosomal complex. This chain is Translation initiation factor IF-2, found in Prochlorococcus marinus (strain AS9601).